The chain runs to 196 residues: ATP-dependent Clp protease proteolytic subunit (196 aa).

Catalysis depends on S101, which acts as the Nucleophile. H126 is a catalytic residue.

The protein belongs to the peptidase S14 family. Component of the chloroplastic Clp protease core complex.

It localises to the plastid. The protein localises to the chloroplast stroma. The catalysed reaction is Hydrolysis of proteins to small peptides in the presence of ATP and magnesium. alpha-casein is the usual test substrate. In the absence of ATP, only oligopeptides shorter than five residues are hydrolyzed (such as succinyl-Leu-Tyr-|-NHMec, and Leu-Tyr-Leu-|-Tyr-Trp, in which cleavage of the -Tyr-|-Leu- and -Tyr-|-Trp bonds also occurs).. Its function is as follows. Cleaves peptides in various proteins in a process that requires ATP hydrolysis. Has a chymotrypsin-like activity. Plays a major role in the degradation of misfolded proteins. This Populus trichocarpa (Western balsam poplar) protein is ATP-dependent Clp protease proteolytic subunit.